Consider the following 291-residue polypeptide: tRNA dimethylallyltransferase (291 aa).

Residue 11-18 participates in ATP binding; it reads GPTASGKS. 13 to 18 is a binding site for substrate; sequence TASGKS. The interval 42 to 45 is interaction with substrate tRNA; sequence DSMQ.

Belongs to the IPP transferase family. In terms of assembly, monomer. The cofactor is Mg(2+).

It catalyses the reaction adenosine(37) in tRNA + dimethylallyl diphosphate = N(6)-dimethylallyladenosine(37) in tRNA + diphosphate. In terms of biological role, catalyzes the transfer of a dimethylallyl group onto the adenine at position 37 in tRNAs that read codons beginning with uridine, leading to the formation of N6-(dimethylallyl)adenosine (i(6)A). The polypeptide is tRNA dimethylallyltransferase (Rubrobacter xylanophilus (strain DSM 9941 / JCM 11954 / NBRC 16129 / PRD-1)).